The chain runs to 207 residues: Peptidyl-prolyl cis-trans isomerase FKBP16-1, chloroplastic (207 aa).

One can recognise a PPIase FKBP-type domain in the interval 104–207 (GDLVELNYVC…VFEIQLLKVL (104 aa)).

It belongs to the FKBP-type PPIase family.

The protein localises to the plastid. Its subcellular location is the chloroplast thylakoid lumen. The enzyme catalyses [protein]-peptidylproline (omega=180) = [protein]-peptidylproline (omega=0). Its function is as follows. PPIases accelerate the folding of proteins. It catalyzes the cis-trans isomerization of proline imidic peptide bonds in oligopeptides. The sequence is that of Peptidyl-prolyl cis-trans isomerase FKBP16-1, chloroplastic (FKBP16-1) from Arabidopsis thaliana (Mouse-ear cress).